Reading from the N-terminus, the 1388-residue chain is Dicer-like protein 2 (1388 aa).

The region spanning 23–203 (MLEASMKENI…LLTVESNLDA (181 aa)) is the Helicase ATP-binding domain. An ATP-binding site is contributed by 36–43 (MDTGSGKT). Residues 144 to 147 (DEAH) carry the DEAH box motif. Positions 371 to 537 (SLLNFLDSLD…DDERQLQSVS (167 aa)) constitute a Helicase C-terminal domain. A Dicer dsRNA-binding fold domain is found at 564–658 (AMAHLHHFCA…LPLTKRPELK (95 aa)). 2 consecutive RNase III domains span residues 919–1059 (ATRL…MDGG) and 1098–1281 (NERL…VDSG). Mg(2+) is bound by residues Glu1137, Asp1267, and Glu1270.

The protein belongs to the helicase family. Dicer subfamily. Mg(2+) serves as cofactor. The cofactor is Mn(2+).

Its function is as follows. Dicer-like endonuclease involved in cleaving double-stranded RNA in the RNA interference (RNAi) pathway. Produces 21 to 25 bp dsRNAs (siRNAs) which target the selective destruction of homologous RNAs leading to sequence-specific suppression of gene expression, called post-transcriptional gene silencing (PTGS). Part of a broad host defense response against viral infection and transposons. In Neosartorya fischeri (strain ATCC 1020 / DSM 3700 / CBS 544.65 / FGSC A1164 / JCM 1740 / NRRL 181 / WB 181) (Aspergillus fischerianus), this protein is Dicer-like protein 2 (dcl2).